We begin with the raw amino-acid sequence, 316 residues long: UPF0761 membrane protein PM1616 (316 aa).

6 helical membrane passes run 36-56 (MLAL…FPVF), 92-112 (QMSA…INSI), 128-148 (LVFS…LIGA), 172-192 (ILSF…YTVV), 204-224 (IGAL…LWYV), and 236-256 (AMAT…VILI).

The protein belongs to the UPF0761 family.

Its subcellular location is the cell inner membrane. The sequence is that of UPF0761 membrane protein PM1616 from Pasteurella multocida (strain Pm70).